We begin with the raw amino-acid sequence, 133 residues long: Ribosome-binding factor A (133 aa).

It belongs to the RbfA family. As to quaternary structure, monomer. Binds 30S ribosomal subunits, but not 50S ribosomal subunits or 70S ribosomes.

The protein resides in the cytoplasm. One of several proteins that assist in the late maturation steps of the functional core of the 30S ribosomal subunit. Associates with free 30S ribosomal subunits (but not with 30S subunits that are part of 70S ribosomes or polysomes). Required for efficient processing of 16S rRNA. May interact with the 5'-terminal helix region of 16S rRNA. In Psychromonas ingrahamii (strain DSM 17664 / CCUG 51855 / 37), this protein is Ribosome-binding factor A.